Consider the following 163-residue polypeptide: Probable RNA-binding protein EIF1AD (163 aa).

An S1-like domain is found at 18-96 (MMEDDYELPT…VKAEISKILT (79 aa)). The interval 106 to 163 (AGIWPERFAKNPPQEAKAQNDDEDSDFEDDLTPNTNRPVQESDEEDEDTDTESSDEED) is disordered. Acidic residues-rich tracts occupy residues 126 to 136 (DDEDSDFEDDL) and 146 to 163 (ESDE…DEED).

This sequence belongs to the EIF1AD family.

The chain is Probable RNA-binding protein EIF1AD from Drosophila pseudoobscura pseudoobscura (Fruit fly).